Here is a 717-residue protein sequence, read N- to C-terminus: Nuclear factor of activated T-cells, cytoplasmic 1 (717 aa).

The segment at 1–38 (MPNTSFPVPSKFPLGPPAAVCGSGETLRPAPPSGGTMK) is disordered. The tract at residues 120-125 (PRIEIT) is calcineurin-binding. Residues 128–220 (LGLHHGSGQF…CVSPKTTDPE (93 aa)) form a transactivation domain A (TAD-A) region. The segment at 202-298 (PQTSPWQSPC…PHGSPRVSVT (97 aa)) is disordered. Residues 203–216 (QTSPWQSPCVSPKT) show a composition bias toward polar residues. A run of 2 repeats spans residues 205 to 221 (SPWQ…DPEE) and 235 to 251 (SPRH…ITEE). The interval 205–300 (SPWQSPCVSP…GSPRVSVTED (96 aa)) is 3 X SP repeats. Phosphoserine occurs at positions 235 and 239. The span at 238-250 (HSPSTSPRASITE) shows a compositional bias: polar residues. S247 carries the phosphoserine; by PKA modification. A Nuclear localization signal motif is present at residues 267–269 (KRK). Phosphoserine; by PKA occurs at positions 271 and 296. Repeat 3 spans residues 284–300 (SPTPSPHGSPRVSVTED). A Nuclear export signal motif is present at residues 312 to 323 (SAIVAAINALTT). Positions 411–593 (PSLPALDWQL…NPIECSQRSA (183 aa)) constitute an RHD domain. The DNA-binding element occupies 440 to 447 (RAHYETEG). The Nuclear localization signal signature appears at 683 to 685 (KRK).

Member of the multicomponent NFATC transcription complex that consists of at least two components, a pre-existing cytoplasmic component NFATC2 and an inducible nuclear component NFATC1. Other members such as NFATC4, NFATC3 or members of the activating protein-1 family, MAF, GATA4 and Cbp/p300 can also bind the complex. NFATC proteins bind to DNA as monomers. Interacts with HOMER2 and HOMER3; this interaction may compete with calcineurin/PPP3CA-binding and hence prevent NFATC1 dephosphorylation and activation. Interacts with TLE6/GRG6. Phosphorylated by NFATC-kinase and GSK3B; phosphorylation induces NFATC1 nuclear exit and dephosphorylation by calcineurin promotes nuclear import. Phosphorylation by PKA and DYRK2 negatively modulates nuclear accumulation, and promotes subsequent phosphorylation by GSK3B or casein kinase 1. Expressed in the submandibular gland (at protein level). Expressed in basal epidermal cells (at protein level). Expressed in spleen, skeletal muscle and skin. Express in the lung and thymus. Weakly expressed in heart, brain, liver and kidney. Not expressed in testis. Expressed in osteoclasts. Also expressed during TNFSF11/RANKL-induced differentiation of bone marrow-derived macrophages to osteoclasts.

The protein resides in the cytoplasm. It is found in the nucleus. Functionally, plays a role in the inducible expression of cytokine genes in T-cells, especially in the induction of the IL-2 or IL-4 gene transcription. Also controls gene expression in embryonic cardiac cells. Could regulate not only the activation and proliferation but also the differentiation and programmed death of T-lymphocytes as well as lymphoid and non-lymphoid cells. Required for osteoclastogenesis and regulates many genes important for osteoclast differentiation and function. This is Nuclear factor of activated T-cells, cytoplasmic 1 (Nfatc1) from Mus musculus (Mouse).